The chain runs to 197 residues: Class A basic helix-loop-helix protein 15 (197 aa).

Residues 1-12 (MKTKNRPPRRRT) are compositionally biased toward basic residues. Disordered stretches follow at residues 1–82 (MKTK…ERER) and 175–197 (TEDQ…REGS). A phosphothreonine mark is found at Thr-12 and Thr-25. A compositionally biased stretch (polar residues) spans 27 to 36 (DRSQSGSGAS). Residues 65–82 (SRRENSVQRRLESNERER) show a composition bias toward basic and acidic residues. The bHLH domain maps to 72 to 124 (QRRLESNERERQRMHKLNNAFQALREVIPHVRADKKLSKIETLTLAKNYIKSL).

In terms of assembly, forms homodimers or heterodimers with TCF3 gene products E12 and E47. These dimers bind to the E-box site, however, heterodimer with MYOD1 does not bind target DNA. As to expression, expressed in liver, spleen and olfactory epithelium. Weaker expression is seen in skeletal muscle, cardiac muscle, eye and brain tissue.

It localises to the nucleus. Its function is as follows. Plays a role in controlling the transcriptional activity of MyoD, ensuring that expanding myoblast populations remain undifferentiated. Repression may occur through muscle-specific E-box occupancy by homodimers. May also negatively regulate bHLH-mediated transcription through an N-terminal repressor domain. Serves as a key regulator of acinar cell function, stability, and identity. Also required for normal organelle localization in exocrine cells and for mitochondrial calcium ion transport. May function as a unique regulator of gene expression in several different embryonic and postnatal cell lineages. Binds to the E-box consensus sequence 5'-CANNTG-3'. The protein is Class A basic helix-loop-helix protein 15 (Bhlha15) of Rattus norvegicus (Rat).